The primary structure comprises 384 residues: Ribosomal RNA small subunit methyltransferase H (384 aa).

Residues 99–101, aspartate 118, tyrosine 145, aspartate 169, and glutamine 176 each bind S-adenosyl-L-methionine; that span reads GGH.

Belongs to the methyltransferase superfamily. RsmH family.

The protein resides in the cytoplasm. The enzyme catalyses cytidine(1402) in 16S rRNA + S-adenosyl-L-methionine = N(4)-methylcytidine(1402) in 16S rRNA + S-adenosyl-L-homocysteine + H(+). Its function is as follows. Specifically methylates the N4 position of cytidine in position 1402 (C1402) of 16S rRNA. The polypeptide is Ribosomal RNA small subunit methyltransferase H (Mycobacteroides abscessus (strain ATCC 19977 / DSM 44196 / CCUG 20993 / CIP 104536 / JCM 13569 / NCTC 13031 / TMC 1543 / L948) (Mycobacterium abscessus)).